A 481-amino-acid polypeptide reads, in one-letter code: UDP-glycosyltransferase 85A2 (481 aa).

UDP-alpha-D-glucose contacts are provided by residues Ser-303, 360 to 362, 377 to 385, and 399 to 402; these read CPQ, HCGWNSTLE, and FAEQ.

This sequence belongs to the UDP-glycosyltransferase family. As to expression, expressed in roots, shoots, leaves and flowers.

This chain is UDP-glycosyltransferase 85A2 (UGT85A2), found in Arabidopsis thaliana (Mouse-ear cress).